The sequence spans 69 residues: Putative membrane protein insertion efficiency factor (69 aa).

Belongs to the UPF0161 family.

The protein localises to the cell inner membrane. Could be involved in insertion of integral membrane proteins into the membrane. The protein is Putative membrane protein insertion efficiency factor of Chromobacterium violaceum (strain ATCC 12472 / DSM 30191 / JCM 1249 / CCUG 213 / NBRC 12614 / NCIMB 9131 / NCTC 9757 / MK).